A 192-amino-acid chain; its full sequence is Crossover junction endodeoxyribonuclease RuvC (192 aa).

Catalysis depends on residues D7, E67, and D140. Mg(2+) is bound by residues D7, E67, and D140. A disordered region spans residues 158-192; that stretch reads RQSGVPPRTNSRRKSGTGGSWEQFVRQSPNVVVRS. Polar residues predominate over residues 182-192; sequence VRQSPNVVVRS.

The protein belongs to the RuvC family. Homodimer which binds Holliday junction (HJ) DNA. The HJ becomes 2-fold symmetrical on binding to RuvC with unstacked arms; it has a different conformation from HJ DNA in complex with RuvA. In the full resolvosome a probable DNA-RuvA(4)-RuvB(12)-RuvC(2) complex forms which resolves the HJ. Mg(2+) serves as cofactor.

It is found in the cytoplasm. It carries out the reaction Endonucleolytic cleavage at a junction such as a reciprocal single-stranded crossover between two homologous DNA duplexes (Holliday junction).. Functionally, the RuvA-RuvB-RuvC complex processes Holliday junction (HJ) DNA during genetic recombination and DNA repair. Endonuclease that resolves HJ intermediates. Cleaves cruciform DNA by making single-stranded nicks across the HJ at symmetrical positions within the homologous arms, yielding a 5'-phosphate and a 3'-hydroxyl group; requires a central core of homology in the junction. The consensus cleavage sequence is 5'-(A/T)TT(C/G)-3'. Cleavage occurs on the 3'-side of the TT dinucleotide at the point of strand exchange. HJ branch migration catalyzed by RuvA-RuvB allows RuvC to scan DNA until it finds its consensus sequence, where it cleaves and resolves the cruciform DNA. The protein is Crossover junction endodeoxyribonuclease RuvC of Chlorobium chlorochromatii (strain CaD3).